A 642-amino-acid polypeptide reads, in one-letter code: 2-oxoacid:ferredoxin oxidoreductase 2, subunit alpha (642 aa).

The YPITP motif motif lies at 263 to 267; the sequence is YPITP. Residues T266 and R356 each coordinate substrate.

Heterodimer composed of an alpha and a beta subunit.

It catalyses the reaction a 2-oxocarboxylate + 2 oxidized [2Fe-2S]-[ferredoxin] + CoA = an acyl-CoA + 2 reduced [2Fe-2S]-[ferredoxin] + CO2 + H(+). Functionally, catalyzes the coenzyme A-dependent oxidative decarboxylation of different 2-oxoacids such as pyruvate, 2-oxobutyrate, glyoxylate and 2-oxoglutarate to form their CoA derivatives. This Aeropyrum pernix (strain ATCC 700893 / DSM 11879 / JCM 9820 / NBRC 100138 / K1) protein is 2-oxoacid:ferredoxin oxidoreductase 2, subunit alpha.